The primary structure comprises 386 residues: Latent membrane protein 1 (386 aa).

The Cytoplasmic segment spans residues 1–23 (MEHDLERGPPGPRRPPRGPPLSS). Residues 24-44 (SLGLALLLLLLALLFWLYIVM) form a helical membrane-spanning segment. The Extracellular portion of the chain corresponds to 45–51 (SDWTGGA). The helical transmembrane segment at 52-72 (LLVLYSFALMLIIIILIIFIF) threads the bilayer. Over 73 to 75 (RRD) the chain is Cytoplasmic. Residues 76 to 96 (LLCPLGALCILLLMITLLLIA) traverse the membrane as a helical segment. The Extracellular portion of the chain corresponds to 97 to 106 (LWNLHGQALF). Residues 107 to 127 (LGIVLFIFGCLLVLGIWIYLL) traverse the membrane as a helical segment. Residues 128-139 (EMLWRLGATIWQ) are Cytoplasmic-facing. A helical membrane pass occupies residues 140–160 (LLAFFLAFFLDLILLIIALYL). The Extracellular segment spans residues 161-163 (QQN). The helical transmembrane segment at 164-184 (WWTLLVDLLWLLLFLAILIWM) threads the bilayer. The Cytoplasmic segment spans residues 185-386 (YYHGQRHSDE…HGPVQLSYYD (202 aa)). The CTAR1 stretch occupies residues 194-232 (EHHHDDSLPHPQQATDDSGHESDSNSNEGRHHLLVSGAG). A disordered region spans residues 194–386 (EHHHDDSLPH…HGPVQLSYYD (193 aa)). Residues 204-208 (PQQAT) carry the Interaction with host TRAF proteins motif. The segment covering 210–224 (DSGHESDSNSNEGRH) has biased composition (basic and acidic residues). Positions 251–267 (NGPQDPDNTDDNGPQDP) are enriched in low complexity. The tract at residues 351-386 (GHGGGDPHLPTLLLGSSGSGGDDDDPHGPVQLSYYD) is CTAR2.

Belongs to the herpesviridae LMP-1 family. As to quaternary structure, interacts (via PXQXT motif) with host tumor necrosis factor receptor-associated factor (TRAF) proteins TRAF1, TRAF2, TRAF3 and TRAF5. Interacts with human protein ZMYND11; leading to negatively regulate NF-kappa-B activation. Interacts with host UBE2I; this interaction induces the sumoylation of various cellular proteins. Interacts with host IRF7. Interacts with host TYK2. Post-translationally, ubiquitinated on the N-terminus.

The protein resides in the host cell membrane. In terms of biological role, acts as a CD40 functional homolog to prevent apoptosis of infected B-lymphocytes and drive their proliferation. Functions as a constitutively active tumor necrosis factor receptor that induces the activation of several signaling pathways, including those of the NF-kappa-B family. LMP1 signaling leads to up-regulation of antiapoptotic proteins and provide growth signals in latently infected cells. Interacts with host UBE2I and subsequently affects the sumoylation state of several cellular proteins. For example, induces the sumoylation of host IRF7 thereby limiting its transcriptional activity and modulating the activation of innate immune responses. Also inhibits host IFN-alpha-stimulated STAT2 nuclear translocation and interferon-stimulated response element transcriptional activity by interacting with and inhibiting host TYK2. Induces SUMO expression during viral latency thereby dysregulating the host sumoylation processes. This chain is Latent membrane protein 1 (LMP1), found in Epstein-Barr virus (strain B95-8) (HHV-4).